Reading from the N-terminus, the 70-residue chain is Large ribosomal subunit protein bL31c (70 aa).

Belongs to the bacterial ribosomal protein bL31 family. Type A subfamily. As to quaternary structure, part of the 50S ribosomal subunit.

It is found in the plastid. The protein localises to the chloroplast. In terms of biological role, binds the 23S rRNA. This Pyropia yezoensis (Susabi-nori) protein is Large ribosomal subunit protein bL31c.